Reading from the N-terminus, the 90-residue chain is Probable Fe(2+)-trafficking protein (90 aa).

It belongs to the Fe(2+)-trafficking protein family.

Functionally, could be a mediator in iron transactions between iron acquisition and iron-requiring processes, such as synthesis and/or repair of Fe-S clusters in biosynthetic enzymes. The protein is Probable Fe(2+)-trafficking protein of Photobacterium profundum (strain SS9).